Consider the following 218-residue polypeptide: Sec-independent protein translocase protein TatB (218 aa).

A helical membrane pass occupies residues 1-21 (MFDIGFSELLLVLVIGLVVLG). Disordered regions lie at residues 126 to 145 (AESA…DVDK) and 174 to 218 (SSVD…GGDR). The span at 199 to 218 (HSTDSHGADQPRTHQPGGDR) shows a compositional bias: basic and acidic residues.

Belongs to the TatB family. As to quaternary structure, the Tat system comprises two distinct complexes: a TatABC complex, containing multiple copies of TatA, TatB and TatC subunits, and a separate TatA complex, containing only TatA subunits. Substrates initially bind to the TatABC complex, which probably triggers association of the separate TatA complex to form the active translocon.

The protein resides in the cell inner membrane. Functionally, part of the twin-arginine translocation (Tat) system that transports large folded proteins containing a characteristic twin-arginine motif in their signal peptide across membranes. Together with TatC, TatB is part of a receptor directly interacting with Tat signal peptides. TatB may form an oligomeric binding site that transiently accommodates folded Tat precursor proteins before their translocation. This is Sec-independent protein translocase protein TatB from Yersinia enterocolitica serotype O:8 / biotype 1B (strain NCTC 13174 / 8081).